Reading from the N-terminus, the 276-residue chain is Putative pyruvate, phosphate dikinase regulatory protein 1 (276 aa).

ADP is bound at residue 157–164; the sequence is GVSRTSKT.

It belongs to the pyruvate, phosphate/water dikinase regulatory protein family. PDRP subfamily.

It carries out the reaction N(tele)-phospho-L-histidyl/L-threonyl-[pyruvate, phosphate dikinase] + ADP = N(tele)-phospho-L-histidyl/O-phospho-L-threonyl-[pyruvate, phosphate dikinase] + AMP + H(+). The catalysed reaction is N(tele)-phospho-L-histidyl/O-phospho-L-threonyl-[pyruvate, phosphate dikinase] + phosphate + H(+) = N(tele)-phospho-L-histidyl/L-threonyl-[pyruvate, phosphate dikinase] + diphosphate. In terms of biological role, bifunctional serine/threonine kinase and phosphorylase involved in the regulation of the pyruvate, phosphate dikinase (PPDK) by catalyzing its phosphorylation/dephosphorylation. The protein is Putative pyruvate, phosphate dikinase regulatory protein 1 of Staphylococcus haemolyticus (strain JCSC1435).